We begin with the raw amino-acid sequence, 166 residues long: Lipoprotein signal peptidase (166 aa).

Helical transmembrane passes span 12-32 (WLWV…LILQ), 70-90 (WFFS…MYRS), and 102-122 (ALII…GFVV). Catalysis depends on residues D123 and D141. Residues 137–157 (FNLADSAICIGAALIVLEGFL) form a helical membrane-spanning segment.

Belongs to the peptidase A8 family.

It is found in the cell inner membrane. It carries out the reaction Release of signal peptides from bacterial membrane prolipoproteins. Hydrolyzes -Xaa-Yaa-Zaa-|-(S,diacylglyceryl)Cys-, in which Xaa is hydrophobic (preferably Leu), and Yaa (Ala or Ser) and Zaa (Gly or Ala) have small, neutral side chains.. The protein operates within protein modification; lipoprotein biosynthesis (signal peptide cleavage). This protein specifically catalyzes the removal of signal peptides from prolipoproteins. The sequence is that of Lipoprotein signal peptidase from Klebsiella pneumoniae (strain 342).